Here is an 80-residue protein sequence, read N- to C-terminus: Acyl carrier protein (80 aa).

Positions 4–79 constitute a Carrier domain; sequence NSIEEKVRSI…DVVAYIEKVQ (76 aa). At Ser39 the chain carries O-(pantetheine 4'-phosphoryl)serine.

This sequence belongs to the acyl carrier protein (ACP) family. In terms of processing, 4'-phosphopantetheine is transferred from CoA to a specific serine of apo-ACP by AcpS. This modification is essential for activity because fatty acids are bound in thioester linkage to the sulfhydryl of the prosthetic group.

Its subcellular location is the cytoplasm. Its pathway is lipid metabolism; fatty acid biosynthesis. Its function is as follows. Carrier of the growing fatty acid chain in fatty acid biosynthesis. The chain is Acyl carrier protein from Akkermansia muciniphila (strain ATCC BAA-835 / DSM 22959 / JCM 33894 / BCRC 81048 / CCUG 64013 / CIP 107961 / Muc).